Here is an 883-residue protein sequence, read N- to C-terminus: Bifunctional heparan sulfate N-deacetylase/N-sulfotransferase 2 (883 aa).

At 1–18 (MLQLWKVVRPARQLELHR) the chain is on the cytoplasmic side. The chain crosses the membrane as a helical; Signal-anchor for type II membrane protein span at residues 19 to 39 (LILLLIGFSLVSMGFLAYYVS). Over 40–883 (TSPKAKEPLP…REELQHSSVG (844 aa)) the chain is Lumenal. Positions 41 to 597 (SPKAKEPLPL…KRHKDIWSKE (557 aa)) are heparan sulfate N-deacetylase 2. Residues 49–82 (PLPLGDCSSSGAAGPGPARPPVPPRPQRPPETTR) form a disordered region. The segment covering 65–77 (PARPPVPPRPQRP) has biased composition (pro residues). Asn233, Asn350, and Asn400 each carry an N-linked (GlcNAc...) asparagine glycan. A heparan sulfate N-sulfotransferase 2 region spans residues 598-883 (KTCDRLPKFL…REELQHSSVG (286 aa)). Lys613 acts as the For sulfotransferase activity in catalysis. 613–617 (KTGTT) provides a ligand contact to 3'-phosphoadenylyl sulfate. N-linked (GlcNAc...) asparagine glycosylation occurs at Asn666. Ser711 serves as a coordination point for 3'-phosphoadenylyl sulfate. 2 N-linked (GlcNAc...) asparagine glycosylation sites follow: Asn726 and Asn802. A disulfide bridge connects residues Cys817 and Cys827. 832 to 836 (KGRRY) is a 3'-phosphoadenylyl sulfate binding site.

It belongs to the sulfotransferase 1 family. NDST subfamily. In terms of assembly, monomer. Widely expressed in adult and throughout development.

The protein localises to the golgi apparatus membrane. The enzyme catalyses alpha-D-glucosaminyl-[heparan sulfate](n) + 3'-phosphoadenylyl sulfate = N-sulfo-alpha-D-glucosaminyl-[heparan sulfate](n) + adenosine 3',5'-bisphosphate + 2 H(+). It participates in glycan metabolism; heparan sulfate biosynthesis. It functions in the pathway glycan metabolism; heparin biosynthesis. Functionally, essential bifunctional enzyme that catalyzes both the N-deacetylation and the N-sulfation of glucosamine (GlcNAc) of the glycosaminoglycan in heparan sulfate. Modifies the GlcNAc-GlcA disaccharide repeating sugar backbone to make N-sulfated heparosan, a prerequisite substrate for later modifications in heparin biosynthesis. Plays a role in determining the extent and pattern of sulfation of heparan sulfate. Required for the exosomal release of SDCBP, CD63 and syndecan. The polypeptide is Bifunctional heparan sulfate N-deacetylase/N-sulfotransferase 2 (Ndst2) (Mus musculus (Mouse)).